A 474-amino-acid chain; its full sequence is Vacuolar basic amino acid transporter 2 (474 aa).

Residues 1–33 (MSISNWITTAYLITSTSFQPLYGSFSDALGRRN) are Cytoplasmic-facing. A helical membrane pass occupies residues 34 to 54 (CLFFANGAFTIGCLACGFSKN). Residues 55 to 62 (IYMLSFMR) are Vacuolar-facing. The chain crosses the membrane as a helical span at residues 63–85 (ALTGIGGGGLITLSTIVNSDVIP). The Cytoplasmic portion of the chain corresponds to 86-97 (SSKRGIFQAFQN). A helical transmembrane segment spans residues 98 to 118 (LLLGFGAICGASFGGTIASSI). Residues 119-121 (GWR) lie on the Vacuolar side of the membrane. A helical membrane pass occupies residues 122–142 (WCFLIQVPISVISSILMNYYV). Over 143–167 (PNQKEYNRQNSSIFQNPGKILRDID) the chain is Cytoplasmic. A helical membrane pass occupies residues 168–188 (VMGSILIITGLTLQLLYLSLG). The Vacuolar portion of the chain corresponds to 189-196 (CSTSKLSW). Residues 197–217 (TSPSVLLLLVGSVIILLLFIL) traverse the membrane as a helical segment. The Cytoplasmic portion of the chain corresponds to 218–238 (HERKTSARAIIPMELVNSSYS). The helical transmembrane segment at 239-259 (VVVLSISILVGFASYAYLFTL) threads the bilayer. Over 260–273 (PLFFQIVLGDSTAK) the chain is Vacuolar. The helical transmembrane segment at 274 to 294 (AGLRLTIPSLFTPVGSLITGF) threads the bilayer. Residues 295–303 (SMSKYNCLR) lie on the Cytoplasmic side of the membrane. The chain crosses the membrane as a helical span at residues 304–324 (LLLYIGISLMFLGNFLFLFIE). Over 325–331 (KTSPNWL) the chain is Vacuolar. A helical transmembrane segment spans residues 332–352 (IGLFLIPANLGQGITFPTTLF). Residues 353–375 (TFIFMFSKSDQATATSTLYLFRS) are Cytoplasmic-facing. A helical membrane pass occupies residues 376-396 (IGSVWGVAISAGVIQLSFAGL). The Vacuolar portion of the chain corresponds to 397–447 (LRSNLKGLLDENKIKKLIVQLSANSSYIGSLHGEVKNTVIKSFDEATKRAH). Asn-420 carries N-linked (GlcNAc...) asparagine glycosylation. The chain crosses the membrane as a helical span at residues 448–468 (LMSTLLSSLALILCILKDNLA). At 469–474 (KPKTRR) the chain is on the cytoplasmic side.

It belongs to the major facilitator superfamily.

The protein resides in the vacuole membrane. Functionally, transporter required for vacuolar uptake of histidine, arginine and lysine and to a lesser extent tyrosine. The sequence is that of Vacuolar basic amino acid transporter 2 (VBA2) from Saccharomyces cerevisiae (strain ATCC 204508 / S288c) (Baker's yeast).